A 280-amino-acid chain; its full sequence is Adenosylcobinamide-GDP ribazoletransferase (280 aa).

Transmembrane regions (helical) follow at residues 4–24 (YLLA…GISM), 39–59 (VVGA…QVIF), 61–81 (GPVL…FNHL), 108–128 (TIGT…YGSI), 196–216 (FLIG…WIGL), and 255–275 (TALI…MGGF).

The protein belongs to the CobS family. Requires Mg(2+) as cofactor.

It localises to the cell membrane. It catalyses the reaction alpha-ribazole + adenosylcob(III)inamide-GDP = adenosylcob(III)alamin + GMP + H(+). It carries out the reaction alpha-ribazole 5'-phosphate + adenosylcob(III)inamide-GDP = adenosylcob(III)alamin 5'-phosphate + GMP + H(+). It functions in the pathway cofactor biosynthesis; adenosylcobalamin biosynthesis; adenosylcobalamin from cob(II)yrinate a,c-diamide: step 7/7. Functionally, joins adenosylcobinamide-GDP and alpha-ribazole to generate adenosylcobalamin (Ado-cobalamin). Also synthesizes adenosylcobalamin 5'-phosphate from adenosylcobinamide-GDP and alpha-ribazole 5'-phosphate. The protein is Adenosylcobinamide-GDP ribazoletransferase of Methanosarcina barkeri (strain Fusaro / DSM 804).